The following is a 93-amino-acid chain: Histone H2B (93 aa).

Low complexity predominate over residues 1–12; that stretch reads MPEPAKSAPAPK. The tract at residues 1-31 is disordered; it reads MPEPAKSAPAPKKGSKKAVTKTQKKGDKKRX. N6-acetyllysine occurs at positions 6 and 13. The segment covering 13–28 has biased composition (basic residues); sequence KGSKKAVTKTQKKGDK. Residue Ser-15 is modified to Phosphoserine. Residues Lys-16 and Lys-21 each carry the N6-acetyllysine modification.

This sequence belongs to the histone H2B family. In terms of assembly, the nucleosome is a histone octamer containing two molecules each of H2A, H2B, H3 and H4 assembled in one H3-H4 heterotetramer and two H2A-H2B heterodimers. The octamer wraps approximately 147 bp of DNA. In terms of processing, monoubiquitination at the C-terminal Lys gives a specific tag for epigenetic transcriptional activation and is also prerequisite for histone H3 'Lys-4' and 'Lys-79' methylation. Phosphorylated on Ser-15 during apoptosis; which facilitates apoptotic chromatin condensation.

It localises to the nucleus. The protein resides in the chromosome. Its function is as follows. Core component of nucleosome. Nucleosomes wrap and compact DNA into chromatin, limiting DNA accessibility to the cellular machineries which require DNA as a template. Histones thereby play a central role in transcription regulation, DNA repair, DNA replication and chromosomal stability. DNA accessibility is regulated via a complex set of post-translational modifications of histones, also called histone code, and nucleosome remodeling. This is Histone H2B from Crocodylus niloticus (Nile crocodile).